Here is a 146-residue protein sequence, read N- to C-terminus: MRGREFPLVLLALVLCQAPRGPAAPVSVGGGTVLAKMYPRGNHWAVGHLMGKKSTGESPYAYEGGNMKEQLREYIRWEDATRNLLSLLEAKGIGSHQPPQWEPLGIRQSTWDSKDGSNFKDMGPRLKVDGLSAPGSQHEGRIPQLN.

The N-terminal stretch at 1–23 (MRGREFPLVLLALVLCQAPRGPA) is a signal peptide. Methionine 50 carries the post-translational modification Methionine amide. The propeptide occupies 54-146 (STGESPYAYE…QHEGRIPQLN (93 aa)). The tract at residues 95 to 146 (SHQPPQWEPLGIRQSTWDSKDGSNFKDMGPRLKVDGLSAPGSQHEGRIPQLN) is disordered. Basic and acidic residues predominate over residues 112 to 128 (DSKDGSNFKDMGPRLKV).

The protein belongs to the bombesin/neuromedin-B/ranatensin family.

It localises to the secreted. It is found in the cytoplasmic vesicle. The protein resides in the secretory vesicle lumen. Its subcellular location is the cell projection. The protein localises to the neuron projection. Functionally, stimulates the release of gastrin and other gastrointestinal hormones. Contributes to the perception of prurient stimuli and to the transmission of itch signals in the spinal cord that promote scratching behavior. Contributes primarily to nonhistaminergic itch sensation. In one study, shown to act in the amygdala as part of an inhibitory network which inhibits memory specifically related to learned fear. In another study, shown to act on vasoactive intestinal peptide (VIP)-expressing cells in the auditory cortex, most likely via extrasynaptic diffusion from local and long-range sources, to mediate disinhibition of glutamatergic cells via VIP cell-specific GRPR signaling which leads to enhanced auditory fear memories. Contributes to the regulation of food intake. Inhibits voltage-gated sodium channels but enhances voltage-gated potassium channels in hippocampal neurons. Induces sighing by acting directly on the pre-Botzinger complex, a cluster of several thousand neurons in the ventrolateral medulla responsible for inspiration during respiratory activity. Its function is as follows. Induces an itch response through activation of receptors present on mast cells, triggering mast cell degranulation. This Sus scrofa (Pig) protein is Gastrin-releasing peptide (GRP).